Consider the following 1015-residue polypeptide: Beta-galactosidase (1015 aa).

The active-site Proton donor is Glu-434. Glu-513 serves as the catalytic Nucleophile.

This sequence belongs to the glycosyl hydrolase 2 family. The cofactor is Mg(2+). Mn(2+) is required as a cofactor.

The enzyme catalyses Hydrolysis of terminal non-reducing beta-D-galactose residues in beta-D-galactosides.. The sequence is that of Beta-galactosidase (lacZ) from Arthrobacter sp. (strain B7).